Consider the following 415-residue polypeptide: Serine hydroxymethyltransferase (415 aa).

(6S)-5,6,7,8-tetrahydrofolate-binding positions include leucine 119 and 123–125 (GHL). Lysine 228 is subject to N6-(pyridoxal phosphate)lysine. A (6S)-5,6,7,8-tetrahydrofolate-binding site is contributed by 353–355 (SAF).

It belongs to the SHMT family. In terms of assembly, homodimer. It depends on pyridoxal 5'-phosphate as a cofactor.

It localises to the cytoplasm. The catalysed reaction is (6R)-5,10-methylene-5,6,7,8-tetrahydrofolate + glycine + H2O = (6S)-5,6,7,8-tetrahydrofolate + L-serine. It functions in the pathway one-carbon metabolism; tetrahydrofolate interconversion. It participates in amino-acid biosynthesis; glycine biosynthesis; glycine from L-serine: step 1/1. Its function is as follows. Catalyzes the reversible interconversion of serine and glycine with tetrahydrofolate (THF) serving as the one-carbon carrier. Also exhibits THF-independent aldolase activity toward beta-hydroxyamino acids, producing glycine and aldehydes, via a retro-aldol mechanism. The sequence is that of Serine hydroxymethyltransferase from Haloarcula marismortui (strain ATCC 43049 / DSM 3752 / JCM 8966 / VKM B-1809) (Halobacterium marismortui).